The primary structure comprises 86 residues: Small ribosomal subunit protein bS20 (86 aa).

A disordered region spans residues M1–M27.

This sequence belongs to the bacterial ribosomal protein bS20 family.

In terms of biological role, binds directly to 16S ribosomal RNA. The protein is Small ribosomal subunit protein bS20 of Vibrio atlanticus (strain LGP32) (Vibrio splendidus (strain Mel32)).